A 163-amino-acid chain; its full sequence is Neurotrophin-3 (163 aa).

A signal peptide spans 1-3 (IQS). Positions 4-119 (TSMDQGILTE…VLNRTSRRKR (116 aa)) are excised as a propeptide. Asn112 is a glycosylation site (N-linked (GlcNAc...) asparagine).

The protein belongs to the NGF-beta family.

It localises to the secreted. In terms of biological role, seems to promote the survival of visceral and proprioceptive sensory neurons. The chain is Neurotrophin-3 (NTF3) from Eryx conicus (Rough-scaled sand boa).